Consider the following 204-residue polypeptide: Recombination protein RecR (204 aa).

A C4-type zinc finger spans residues 58-75; the sequence is CSVCQNITDVGVDPCALC. The region spanning 83–181 is the Toprim domain; that stretch reads SVICVVESPV…HVTKIARGIP (99 aa).

It belongs to the RecR family.

May play a role in DNA repair. It seems to be involved in an RecBC-independent recombinational process of DNA repair. It may act with RecF and RecO. The polypeptide is Recombination protein RecR (Pelodictyon phaeoclathratiforme (strain DSM 5477 / BU-1)).